The primary structure comprises 304 residues: Ferrochelatase (304 aa).

2 residues coordinate Fe cation: histidine 169 and glutamate 241.

This sequence belongs to the ferrochelatase family.

The protein localises to the cytoplasm. It carries out the reaction heme b + 2 H(+) = protoporphyrin IX + Fe(2+). Its pathway is porphyrin-containing compound metabolism; protoheme biosynthesis; protoheme from protoporphyrin-IX: step 1/1. In terms of biological role, catalyzes the ferrous insertion into protoporphyrin IX. The polypeptide is Ferrochelatase (Thermoplasma volcanium (strain ATCC 51530 / DSM 4299 / JCM 9571 / NBRC 15438 / GSS1)).